Consider the following 256-residue polypeptide: MIPDVGFLVLLTGALFICIKAAPATTDVDPTFEGRIVMEGDILIREEQLTERNAIALENMRWPDATIVYKLTGWYALFPGDIKKAMRHIEENTCIKFKARSNEEGYVKIYKGEKESCFADIGYFASEQRLSLGSGCKIFGRILHEMGHTIGLFHEHTRPDRDNYITVHEDNIRPGSKRNYRKTPSYMTRVIGPFDYDSIMIYGETAGSRDPMHLKSMEANKPGVTLISSRYKDRLTDLDIKKINTLYNCPGKEKFS.

A signal peptide spans 1–24 (MIPDVGFLVLLTGALFICIKAAPA). The propeptide occupies 25–52 (TTDVDPTFEGRIVMEGDILIREEQLTER). In terms of domain architecture, Peptidase M12A spans 53–250 (NAIALENMRW…KKINTLYNCP (198 aa)). Intrachain disulfides connect Cys94–Cys249 and Cys117–Cys136. His144 contacts Zn(2+). The active site involves Glu145. Residues His148 and His154 each coordinate Zn(2+).

Monomer. Zn(2+) serves as cofactor. Expressed by the venom gland.

It localises to the secreted. With respect to regulation, inhibited by 1,10-phenanthroline. Zinc metalloprotease. Provoques deadhesion of endothelial cells from cell cultures, and also degradation of fibronectin, fibrinogen and gelatin in vitro. Its role in the venom is not fully understood but it might act as a spreading factor that facilitates diffusion of other venom toxins. Alternatively, it might be involved in the proteolytic processing of other venom toxins or it might play a role in extra-oral digestion of prey. The protein is Astacin-like metalloprotease toxin 2 of Loxosceles intermedia (Brown spider).